The chain runs to 369 residues: S-adenosylmethionine:tRNA ribosyltransferase-isomerase (369 aa).

Belongs to the QueA family. As to quaternary structure, monomer.

Its subcellular location is the cytoplasm. The catalysed reaction is 7-aminomethyl-7-carbaguanosine(34) in tRNA + S-adenosyl-L-methionine = epoxyqueuosine(34) in tRNA + adenine + L-methionine + 2 H(+). Its pathway is tRNA modification; tRNA-queuosine biosynthesis. In terms of biological role, transfers and isomerizes the ribose moiety from AdoMet to the 7-aminomethyl group of 7-deazaguanine (preQ1-tRNA) to give epoxyqueuosine (oQ-tRNA). The protein is S-adenosylmethionine:tRNA ribosyltransferase-isomerase of Synechococcus sp. (strain CC9311).